The sequence spans 178 residues: Large ribosomal subunit protein uL6 (178 aa).

It belongs to the universal ribosomal protein uL6 family. As to quaternary structure, part of the 50S ribosomal subunit.

Its function is as follows. This protein binds to the 23S rRNA, and is important in its secondary structure. It is located near the subunit interface in the base of the L7/L12 stalk, and near the tRNA binding site of the peptidyltransferase center. The polypeptide is Large ribosomal subunit protein uL6 (Streptococcus pneumoniae (strain ATCC 700669 / Spain 23F-1)).